Here is an 84-residue protein sequence, read N- to C-terminus: DNA-directed RNA polymerase subunit Rpo5 (84 aa).

It belongs to the archaeal Rpo5/eukaryotic RPB5 RNA polymerase subunit family. Part of the RNA polymerase complex.

The protein resides in the cytoplasm. It catalyses the reaction RNA(n) + a ribonucleoside 5'-triphosphate = RNA(n+1) + diphosphate. Its function is as follows. DNA-dependent RNA polymerase (RNAP) catalyzes the transcription of DNA into RNA using the four ribonucleoside triphosphates as substrates. This chain is DNA-directed RNA polymerase subunit Rpo5, found in Sulfurisphaera tokodaii (strain DSM 16993 / JCM 10545 / NBRC 100140 / 7) (Sulfolobus tokodaii).